The chain runs to 266 residues: Cysteine-rich repeat secretory protein 41 (266 aa).

The signal sequence occupies residues 1–26 (MSSVFGSVHILAMIAIQLLLTHSVSS). Gnk2-homologous domains are found at residues 33 to 136 (YLHH…SVAS) and 142 to 253 (YEND…LYPF).

The protein belongs to the cysteine-rich repeat secretory protein family.

The protein resides in the secreted. This chain is Cysteine-rich repeat secretory protein 41 (CRRSP41), found in Arabidopsis thaliana (Mouse-ear cress).